The chain runs to 955 residues: MAM domain-containing glycosylphosphatidylinositol anchor protein 1 (955 aa).

The signal sequence occupies residues 1–18 (MEVTCLLLLALIPFHCRG). Ig-like domains follow at residues 24-123 (PAQA…KSIR) and 132-230 (PMLT…KAIT). Residues N42 and N90 are each glycosylated (N-linked (GlcNAc...) asparagine). Disulfide bonds link C60–C108 and C157–C214. N-linked (GlcNAc...) asparagine glycans are attached at residues N235, N247, N257, N307, and N331. In terms of domain architecture, Ig-like 3 spans 240-323 (PALKLSVNET…VGNPAKKTVN (84 aa)). C262 and C308 form a disulfide bridge. 3 Ig-like domains span residues 338 to 432 (PDVI…VEVN), 440 to 532 (PTIS…AQVQ), and 539 to 631 (PEVE…FQVS). A disulfide bond links C357 and C415. N432 is a glycosylation site (N-linked (GlcNAc...) asparagine). Cystine bridges form between C463-C514 and C560-C615. Positions 643–743 (TPNPTRSHKL…SRIIHYTEPI (101 aa)) constitute a Fibronectin type-III domain. N-linked (GlcNAc...) asparagine glycosylation is found at N655 and N747. One can recognise an MAM domain in the interval 751-918 (NTCHFEDEKI…VTLKKGECPR (168 aa)). The span at 779–788 (LTQNPKRSPN) shows a compositional bias: polar residues. The tract at residues 779 to 798 (LTQNPKRSPNTGPPTDISGT) is disordered. N826 is a glycosylation site (N-linked (GlcNAc...) asparagine). A lipid anchor (GPI-anchor amidated serine) is attached at S932. A propeptide spans 933-955 (GAPCQSSPQLWGPMAIFLLALQR) (removed in mature form).

In terms of assembly, interacts heterophilically through its MAM domain with proteins in axon-rich regions and through its Ig-like domains with proteins in differentiating muscle. Interacts (through the Ig-like domains) with NLGN2. As to expression, has been found in brain, heart, skeletal muscle and kidney. Found to be overexpressed in tumor tissues.

It localises to the cell membrane. Required for radial migration of cortical neurons in the superficial layer of the neocortex. Plays a role in the formation or maintenance of inhibitory synapses. May function by inhibiting the activity of NLGN2. The chain is MAM domain-containing glycosylphosphatidylinositol anchor protein 1 (MDGA1) from Homo sapiens (Human).